The following is a 265-amino-acid chain: Protein Msed_2121 (265 aa).

The protein belongs to the CinA family.

This chain is Protein Msed_2121, found in Metallosphaera sedula (strain ATCC 51363 / DSM 5348 / JCM 9185 / NBRC 15509 / TH2).